Consider the following 456-residue polypeptide: Chromosomal replication initiator protein DnaA 1 (456 aa).

A domain I, interacts with DnaA modulators region spans residues 1–68; it reads MRAWEEFLLL…KASLINNNGK (68 aa). The domain II stretch occupies residues 68–101; it reads KPIRVRVTSLDKSTPFKETQIQQEKTAYFTMKYG. The domain III, AAA+ region stretch occupies residues 102-320; that stretch reads DIDPNMSFAN…HALTTLAKRV (219 aa). Residues S150, G152, K153, and T154 each coordinate ATP. Positions 321-456 are domain IV, binds dsDNA; the sequence is AYKKLSHQML…AYQSLDFIED (136 aa).

The protein belongs to the DnaA family. As to quaternary structure, oligomerizes as a right-handed, spiral filament on DNA at oriC.

The protein localises to the cytoplasm. In terms of biological role, plays an essential role in the initiation and regulation of chromosomal replication. ATP-DnaA binds to the origin of replication (oriC) to initiate formation of the DNA replication initiation complex once per cell cycle. Binds the DnaA box (a 9 base pair repeat at the origin) and separates the double-stranded (ds)DNA. Forms a right-handed helical filament on oriC DNA; dsDNA binds to the exterior of the filament while single-stranded (ss)DNA is stabiized in the filament's interior. The ATP-DnaA-oriC complex binds and stabilizes one strand of the AT-rich DNA unwinding element (DUE), permitting loading of DNA polymerase. After initiation quickly degrades to an ADP-DnaA complex that is not apt for DNA replication. Binds acidic phospholipids. This chain is Chromosomal replication initiator protein DnaA 1, found in Chlamydia trachomatis serovar D (strain ATCC VR-885 / DSM 19411 / UW-3/Cx).